Reading from the N-terminus, the 380-residue chain is L-prolyl-[peptidyl-carrier protein] dehydrogenase (380 aa).

Residue Glu-243 is the Proton acceptor of the active site. 2 residues coordinate FAD: Arg-269 and Gln-280.

Belongs to the acyl-CoA dehydrogenase family. The cofactor is FAD.

The enzyme catalyses L-prolyl-[peptidyl-carrier protein] + 2 oxidized [electron-transfer flavoprotein] + H(+) = (1H-pyrrole-2-carbonyl)-[peptidyl-carrier protein] + 2 reduced [electron-transfer flavoprotein]. Its function is as follows. Involved in the biosynthesis of pyoluteorin. Catalyzes the desaturation of the L-prolyl-[PltL] to yield 1H-pyrrole-2-carbonyl-[PltL]. This Pseudomonas fluorescens (strain ATCC BAA-477 / NRRL B-23932 / Pf-5) protein is L-prolyl-[peptidyl-carrier protein] dehydrogenase.